Consider the following 165-residue polypeptide: 6,7-dimethyl-8-ribityllumazine synthase (165 aa).

Residues F24, 62–64 (AFE), and 86–88 (AVI) contribute to the 5-amino-6-(D-ribitylamino)uracil site. Residue 91–92 (DT) coordinates (2S)-2-hydroxy-3-oxobutyl phosphate. H94 acts as the Proton donor in catalysis. Residue F119 participates in 5-amino-6-(D-ribitylamino)uracil binding. R133 serves as a coordination point for (2S)-2-hydroxy-3-oxobutyl phosphate.

Belongs to the DMRL synthase family.

It carries out the reaction (2S)-2-hydroxy-3-oxobutyl phosphate + 5-amino-6-(D-ribitylamino)uracil = 6,7-dimethyl-8-(1-D-ribityl)lumazine + phosphate + 2 H2O + H(+). It participates in cofactor biosynthesis; riboflavin biosynthesis; riboflavin from 2-hydroxy-3-oxobutyl phosphate and 5-amino-6-(D-ribitylamino)uracil: step 1/2. Its function is as follows. Catalyzes the formation of 6,7-dimethyl-8-ribityllumazine by condensation of 5-amino-6-(D-ribitylamino)uracil with 3,4-dihydroxy-2-butanone 4-phosphate. This is the penultimate step in the biosynthesis of riboflavin. This chain is 6,7-dimethyl-8-ribityllumazine synthase, found in Prochlorococcus marinus (strain MIT 9313).